The sequence spans 464 residues: UDP-N-acetylmuramoylalanine--D-glutamate ligase (464 aa).

112–118 (GTDGKTT) is an ATP binding site.

This sequence belongs to the MurCDEF family.

The protein localises to the cytoplasm. It catalyses the reaction UDP-N-acetyl-alpha-D-muramoyl-L-alanine + D-glutamate + ATP = UDP-N-acetyl-alpha-D-muramoyl-L-alanyl-D-glutamate + ADP + phosphate + H(+). It participates in cell wall biogenesis; peptidoglycan biosynthesis. Functionally, cell wall formation. Catalyzes the addition of glutamate to the nucleotide precursor UDP-N-acetylmuramoyl-L-alanine (UMA). In Chlorobium chlorochromatii (strain CaD3), this protein is UDP-N-acetylmuramoylalanine--D-glutamate ligase.